A 408-amino-acid polypeptide reads, in one-letter code: GPI transamidase component GAB1 homolog (408 aa).

Helical transmembrane passes span 9–29, 66–86, 88–108, 125–145, 149–169, 207–227, 266–286, 303–323, 339–359, and 370–390; these read LLGL…TWIA, VFYQ…LGGI, VTRF…YLIA, PLWI…GIAC, MILN…SYAI, IFVV…FFLN, FFLF…SIRL, LFKA…LPIF, AIVF…TLGC, and LILA…LLLV. The interval 247 to 267 is may be involved in recognition of long-chain fatty acids in GPI; it reads PNLGLWWYFFTEMFNEFRTFF.

It belongs to the PIGU family. In terms of assembly, forms a complex with PIG-S homolog, PIG-T homolog and GPI8.

The protein resides in the endoplasmic reticulum membrane. It functions in the pathway glycolipid biosynthesis; glycosylphosphatidylinositol-anchor biosynthesis. In terms of biological role, component of the GPI transamidase complex. May be involved in the recognition of either the GPI attachment signal or the lipid portion of GPI. The sequence is that of GPI transamidase component GAB1 homolog from Schizosaccharomyces pombe (strain 972 / ATCC 24843) (Fission yeast).